Consider the following 173-residue polypeptide: Photosystem I assembly protein Ycf3 (173 aa).

TPR repeat units follow at residues 36–69 (AFAYYRDGMAAQSEGEYAEALENYREALALEQDD), 73–106 (SYILYNMGLIYQSNGELDKALEYYHQALELNPRL), and 121–154 (GEQSLQAGDEETAEALFDEAAQYWIRAIRIAPNN).

Belongs to the Ycf3 family.

The protein resides in the cellular thylakoid membrane. Essential for the assembly of the photosystem I (PSI) complex. May act as a chaperone-like factor to guide the assembly of the PSI subunits. The chain is Photosystem I assembly protein Ycf3 from Synechococcus sp. (strain JA-3-3Ab) (Cyanobacteria bacterium Yellowstone A-Prime).